A 352-amino-acid polypeptide reads, in one-letter code: Histidine biosynthesis bifunctional protein HisB (352 aa).

Positions 1-163 are histidinol-phosphatase; the sequence is MKKILFIDRD…MVASAIINDA (163 aa). The active-site Nucleophile is D8. The Mg(2+) site is built by D8 and D10. The active-site Proton donor is D10. Residues C91, H93, C99, and C101 each coordinate Zn(2+). D128 lines the Mg(2+) pocket. Residues 164–352 are imidazoleglycerol-phosphate dehydratase; sequence RKASVQRKTK…NYLPSTKGVL (189 aa).

It in the N-terminal section; belongs to the histidinol-phosphatase family. The protein in the C-terminal section; belongs to the imidazoleglycerol-phosphate dehydratase family. Requires Mg(2+) as cofactor. It depends on Zn(2+) as a cofactor.

The protein localises to the cytoplasm. It catalyses the reaction D-erythro-1-(imidazol-4-yl)glycerol 3-phosphate = 3-(imidazol-4-yl)-2-oxopropyl phosphate + H2O. It carries out the reaction L-histidinol phosphate + H2O = L-histidinol + phosphate. It participates in amino-acid biosynthesis; L-histidine biosynthesis; L-histidine from 5-phospho-alpha-D-ribose 1-diphosphate: step 6/9. It functions in the pathway amino-acid biosynthesis; L-histidine biosynthesis; L-histidine from 5-phospho-alpha-D-ribose 1-diphosphate: step 8/9. In Legionella pneumophila subsp. pneumophila (strain Philadelphia 1 / ATCC 33152 / DSM 7513), this protein is Histidine biosynthesis bifunctional protein HisB.